The sequence spans 344 residues: Holliday junction branch migration complex subunit RuvB (344 aa).

The interval Met-1–Tyr-182 is large ATPase domain (RuvB-L). Residues Ile-21, Arg-22, Gly-63, Lys-66, Thr-67, Thr-68, Glu-129–Phe-131, Arg-172, Tyr-182, and Arg-219 contribute to the ATP site. Mg(2+) is bound at residue Thr-67. A small ATPAse domain (RuvB-S) region spans residues Pro-183–Glu-253. The interval Glu-256 to Val-344 is head domain (RuvB-H). DNA is bound by residues Arg-311 and Arg-316.

Belongs to the RuvB family. Homohexamer. Forms an RuvA(8)-RuvB(12)-Holliday junction (HJ) complex. HJ DNA is sandwiched between 2 RuvA tetramers; dsDNA enters through RuvA and exits via RuvB. An RuvB hexamer assembles on each DNA strand where it exits the tetramer. Each RuvB hexamer is contacted by two RuvA subunits (via domain III) on 2 adjacent RuvB subunits; this complex drives branch migration. In the full resolvosome a probable DNA-RuvA(4)-RuvB(12)-RuvC(2) complex forms which resolves the HJ.

It is found in the cytoplasm. The catalysed reaction is ATP + H2O = ADP + phosphate + H(+). Functionally, the RuvA-RuvB-RuvC complex processes Holliday junction (HJ) DNA during genetic recombination and DNA repair, while the RuvA-RuvB complex plays an important role in the rescue of blocked DNA replication forks via replication fork reversal (RFR). RuvA specifically binds to HJ cruciform DNA, conferring on it an open structure. The RuvB hexamer acts as an ATP-dependent pump, pulling dsDNA into and through the RuvAB complex. RuvB forms 2 homohexamers on either side of HJ DNA bound by 1 or 2 RuvA tetramers; 4 subunits per hexamer contact DNA at a time. Coordinated motions by a converter formed by DNA-disengaged RuvB subunits stimulates ATP hydrolysis and nucleotide exchange. Immobilization of the converter enables RuvB to convert the ATP-contained energy into a lever motion, pulling 2 nucleotides of DNA out of the RuvA tetramer per ATP hydrolyzed, thus driving DNA branch migration. The RuvB motors rotate together with the DNA substrate, which together with the progressing nucleotide cycle form the mechanistic basis for DNA recombination by continuous HJ branch migration. Branch migration allows RuvC to scan DNA until it finds its consensus sequence, where it cleaves and resolves cruciform DNA. This chain is Holliday junction branch migration complex subunit RuvB, found in Chlorobium luteolum (strain DSM 273 / BCRC 81028 / 2530) (Pelodictyon luteolum).